We begin with the raw amino-acid sequence, 474 residues long: Probable diacyglycerol O-acyltransferase Tgs4 (474 aa).

The active-site Proton acceptor is histidine 135.

This sequence belongs to the long-chain O-acyltransferase family.

It catalyses the reaction an acyl-CoA + a 1,2-diacyl-sn-glycerol = a triacyl-sn-glycerol + CoA. Its pathway is glycerolipid metabolism; triacylglycerol biosynthesis. Functionally, required for maintaining the appropriate mycolic acid composition and permeability of the envelope on its exposure to acidic pH. This chain is Probable diacyglycerol O-acyltransferase Tgs4 (tgs4), found in Mycobacterium tuberculosis (strain CDC 1551 / Oshkosh).